The primary structure comprises 633 residues: Probable sodium/potassium/calcium exchanger CG1090 (633 aa).

A signal peptide spans 1–21 (MWNMGLLFLIYYCVSIYSAKG). Residues 22 to 111 (DTKDGQVLPL…PLMNKWARQH (90 aa)) are Extracellular-facing. Residues 112 to 132 (GGLILHILVAVFTFFGLAIVC) form a helical membrane-spanning segment. Residues 133 to 157 (DEYFVASLDRLCEELKLSPDVAGAT) are Cytoplasmic-facing. The stretch at 153–193 (VAGATFMAAGSSAPELATVVIGVFFAKDDIGISGVIGSAVF) is one Alpha-1 repeat. A helical transmembrane segment spans residues 158-178 (FMAAGSSAPELATVVIGVFFA). The Extracellular segment spans residues 179 to 181 (KDD). The helical transmembrane segment at 182-202 (IGISGVIGSAVFNIMFVISVC) threads the bilayer. At 203–220 (ALCSGTVCQLNWWPLVRD) the chain is on the cytoplasmic side. 2 consecutive transmembrane segments (helical) span residues 221-241 (CFFY…DVIS) and 242-262 (CFES…LHFN). Topologically, residues 263–427 (TELERWALGL…EPRRDPLLRP (165 aa)) are extracellular. 3 stretches are compositionally biased toward polar residues: residues 298–310 (YTQE…QGQK), 320–333 (AKPQ…SDPN), and 395–405 (QVVSTQATSAG). The interval 298 to 422 (YTQESVGQTQ…TDKQREPRRD (125 aa)) is disordered. Positions 411 to 422 (KSTDKQREPRRD) are enriched in basic and acidic residues. A helical transmembrane segment spans residues 428 to 448 (MEGGLPALVSWYVVYPIHFLC). Residues 449 to 468 (KKTMPDCRQEQYRNWYPFTF) are Cytoplasmic-facing. Residues 469–489 (LMSMVWISFYSYFMVWMITVI) form a helical membrane-spanning segment. Residues 490–500 (GSTLAIPDTVM) are Extracellular-facing. The chain crosses the membrane as a helical span at residues 501–521 (GLTFVAAGVSVPDALSSIAVI). One copy of the Alpha-2 repeat lies at 506-537 (AAGVSVPDALSSIAVIKEGFGDMAVSNAIGSN). Over 522 to 535 (KEGFGDMAVSNAIG) the chain is Cytoplasmic. Residues 536 to 556 (SNVFDILVCLGLPWFIQTAII) traverse the membrane as a helical segment. Over 557–568 (KPGSHVNVISKG) the chain is Extracellular. The chain crosses the membrane as a helical span at residues 569 to 589 (LAYSTLSLFSTVVFLILSTHL). The Cytoplasmic portion of the chain corresponds to 590–597 (NGWKLDKR). The chain crosses the membrane as a helical span at residues 598–618 (LGIILMVWYLFFITLASLYEL). Residues 619-633 (NVFGYMNPPECPSTY) lie on the Extracellular side of the membrane.

It belongs to the Ca(2+):cation antiporter (CaCA) (TC 2.A.19) family. SLC24A subfamily.

The protein resides in the membrane. May function in the removal and maintenance of calcium homeostasis. Transports one Ca(2+) and 1 K(+) in exchange for 4 Na(+). This Drosophila melanogaster (Fruit fly) protein is Probable sodium/potassium/calcium exchanger CG1090.